A 372-amino-acid chain; its full sequence is Ca(2+)/H(+) antiporter (372 aa).

Helical transmembrane passes span 7–27, 29–49, 62–82, 94–114, 134–154, 162–182, 222–242, 251–271, 294–314, 320–340, and 352–372; these read IFLV…LGWG, TTVF…MGTA, GGLL…YIAL, LTGS…FLGG, MNLG…STGV, LSVA…VFSM, LWTG…ELLV, SLGL…GNAA, GSSL…GWAI, LNFN…VNSI, and ILLL…PTLV.

This sequence belongs to the Ca(2+):cation antiporter (CaCA) (TC 2.A.19) family. Cation/proton exchanger (CAX) subfamily.

The protein localises to the cell inner membrane. Ca(+)/H(+) antiporter that extrudes calcium in exchange for external protons. Plays an important role in salt tolerance. Does not transport sodium or lithium. The sequence is that of Ca(2+)/H(+) antiporter from Synechocystis sp. (strain ATCC 27184 / PCC 6803 / Kazusa).